Reading from the N-terminus, the 356-residue chain is Histidinol-phosphate aminotransferase 1 (356 aa).

Lys213 carries the N6-(pyridoxal phosphate)lysine modification.

This sequence belongs to the class-II pyridoxal-phosphate-dependent aminotransferase family. Histidinol-phosphate aminotransferase subfamily. Homodimer. Pyridoxal 5'-phosphate is required as a cofactor.

The catalysed reaction is L-histidinol phosphate + 2-oxoglutarate = 3-(imidazol-4-yl)-2-oxopropyl phosphate + L-glutamate. It functions in the pathway amino-acid biosynthesis; L-histidine biosynthesis; L-histidine from 5-phospho-alpha-D-ribose 1-diphosphate: step 7/9. This Bordetella parapertussis (strain 12822 / ATCC BAA-587 / NCTC 13253) protein is Histidinol-phosphate aminotransferase 1 (hisC1).